Consider the following 270-residue polypeptide: uncharacterized protein (270 aa).

The N-terminal stretch at 1 to 22 (MEYIKKIALYMSVLLLIIFIGG) is a signal peptide. Cysteine 23 carries N-palmitoyl cysteine lipidation. A lipid anchor (S-diacylglycerol cysteine) is attached at cysteine 23.

It belongs to the staphylococcal tandem lipoprotein family.

The protein resides in the cell membrane. This is an uncharacterized protein from Staphylococcus aureus (strain MW2).